A 369-amino-acid polypeptide reads, in one-letter code: Olfactory receptor 2T1 (369 aa).

Residues 1-76 (MWQEYYFLNV…LFNRKETSGL (76 aa)) lie on the Extracellular side of the membrane. N56 carries N-linked (GlcNAc...) asparagine glycosylation. Residues 77-97 (IFAIISIIFFTALMANGVMIF) form a helical membrane-spanning segment. The Cytoplasmic portion of the chain corresponds to 98-107 (LIQTDLRLHT). The chain crosses the membrane as a helical span at residues 108-128 (PMYFLLSHLSLIDMMYISTIV). The Extracellular portion of the chain corresponds to 129–148 (PKMLVNYLLDQRTISFVGCT). A disulfide bridge connects residues C147 and C239. The helical transmembrane segment at 149–169 (AQHFLYLTLVGAEFFLLGLMA) threads the bilayer. Residues 170-191 (YDRYVAICNPLRYPVLMSRRVC) lie on the Cytoplasmic side of the membrane. Residues 192 to 212 (WMIIAGSWFGGSLDGFLLTPI) traverse the membrane as a helical segment. Topologically, residues 213 to 247 (TMSFPFCNSREINHFFCEAPAVLKLACADTALYET) are extracellular. The chain crosses the membrane as a helical span at residues 248–268 (VMYVCCVLMLLIPFSVVLASY). Over 269-286 (ARILTTVQCMSSVEGRKK) the chain is Cytoplasmic. Residues 287-307 (AFATCSSHMTVVSLFYGAAMY) form a helical membrane-spanning segment. Residues 308–321 (TYMLPHSYHKPAQD) lie on the Extracellular side of the membrane. The helical transmembrane segment at 322-342 (KVLSVFYTILTPMLNPLIYSL) threads the bilayer. The Cytoplasmic segment spans residues 343-369 (RNKDVTGALKRALGRFKGPQRVSGGVF).

Belongs to the G-protein coupled receptor 1 family.

It is found in the cell membrane. Odorant receptor. This is Olfactory receptor 2T1 (OR2T1) from Homo sapiens (Human).